Consider the following 481-residue polypeptide: ATP synthase subunit beta (481 aa).

Residue 167-174 participates in ATP binding; it reads GGAGVGKT.

Belongs to the ATPase alpha/beta chains family. As to quaternary structure, F-type ATPases have 2 components, CF(1) - the catalytic core - and CF(0) - the membrane proton channel. CF(1) has five subunits: alpha(3), beta(3), gamma(1), delta(1), epsilon(1). CF(0) has three main subunits: a(1), b(2) and c(9-12). The alpha and beta chains form an alternating ring which encloses part of the gamma chain. CF(1) is attached to CF(0) by a central stalk formed by the gamma and epsilon chains, while a peripheral stalk is formed by the delta and b chains.

It is found in the cell membrane. The enzyme catalyses ATP + H2O + 4 H(+)(in) = ADP + phosphate + 5 H(+)(out). Functionally, produces ATP from ADP in the presence of a proton gradient across the membrane. The catalytic sites are hosted primarily by the beta subunits. In Corynebacterium efficiens (strain DSM 44549 / YS-314 / AJ 12310 / JCM 11189 / NBRC 100395), this protein is ATP synthase subunit beta.